The primary structure comprises 320 residues: MEVQIGIDLMGGDHSPLVVWQVLVDVLKSQSSTIPFAFTLFASEEIRKQIQEEFISDLPQEKFPKIISAENFVAMEDSPLAAIRKKSSSMALGLDYLQEDKLDAFISTGNTGALVTLARAKIPLFPAVSRPALLVCVPTMRGHAVILDVGANISVKPEEMVGFARMGLAYRQCLGDSKIPTIGLLNIGSEERKGTEAHRQTFRMLRETFGEAFLGNIESGAVFDGAADIVVTDGFTGNIFLKTAEGVFEFLQRILGDKLEADIQRRLDYTFYPGSVVCGLSKLVIKCHGKACGSSLFHGILGSINLAQARLCKRILSNLI.

The protein belongs to the PlsX family. As to quaternary structure, homodimer. Probably interacts with PlsY.

Its subcellular location is the cytoplasm. The catalysed reaction is a fatty acyl-[ACP] + phosphate = an acyl phosphate + holo-[ACP]. It functions in the pathway lipid metabolism; phospholipid metabolism. Functionally, catalyzes the reversible formation of acyl-phosphate (acyl-PO(4)) from acyl-[acyl-carrier-protein] (acyl-ACP). This enzyme utilizes acyl-ACP as fatty acyl donor, but not acyl-CoA. In Chlamydia pneumoniae (Chlamydophila pneumoniae), this protein is Phosphate acyltransferase.